The primary structure comprises 506 residues: Anaerobic nitric oxide reductase transcription regulator NorR (506 aa).

4-aspartylphosphate is present on aspartate 57. The region spanning 187–416 (MIGLSPAMTQ…LEHAIHRAVV (230 aa)) is the Sigma-54 factor interaction domain. ATP is bound by residues 215-222 (GETGTGKE) and 278-287 (ADNGTLFLDE). A DNA-binding region (H-T-H motif) is located at residues 481 to 500 (WAASARALETDVANLHRLAK).

It functions in the pathway nitrogen metabolism; nitric oxide reduction. In terms of biological role, required for the expression of anaerobic nitric oxide (NO) reductase, acts as a transcriptional activator for at least the norVW operon. Activation also requires sigma-54. The sequence is that of Anaerobic nitric oxide reductase transcription regulator NorR from Salmonella newport (strain SL254).